A 448-amino-acid polypeptide reads, in one-letter code: Glutamyl-tRNA reductase (448 aa).

Residues 49 to 52 (TCNR), serine 109, 114 to 116 (ETQ), and glutamine 120 contribute to the substrate site. The Nucleophile role is filled by cysteine 50. 189 to 194 (GAGEMS) lines the NADP(+) pocket.

It belongs to the glutamyl-tRNA reductase family. In terms of assembly, homodimer.

It carries out the reaction (S)-4-amino-5-oxopentanoate + tRNA(Glu) + NADP(+) = L-glutamyl-tRNA(Glu) + NADPH + H(+). It participates in porphyrin-containing compound metabolism; protoporphyrin-IX biosynthesis; 5-aminolevulinate from L-glutamyl-tRNA(Glu): step 1/2. Functionally, catalyzes the NADPH-dependent reduction of glutamyl-tRNA(Glu) to glutamate 1-semialdehyde (GSA). This Staphylococcus aureus (strain Mu3 / ATCC 700698) protein is Glutamyl-tRNA reductase.